A 226-amino-acid polypeptide reads, in one-letter code: MTDRKRGFFGWTWFVMWRFLLLLALLLLVLRFVPPPTTSFMLQSDYPVSQHWVSIDELPAHMPLAVVAAEDQLFPEHFGVDINSITKALNQYDDGEGLRGASTITQQTAKNLLLWPGRNFVRKGLEAMLAVSLEAIWGKKRILEVYLNVAEFGKGIYGVEAASQHYFNKSARYLSNNEAARLAVLLPSPRNRNPNNLTPYLRQRVAWGEKQMRQLGSGYLKPILTN.

The chain crosses the membrane as a helical span at residues 8–28 (FFGWTWFVMWRFLLLLALLLL).

It belongs to the glycosyltransferase 51 family.

The protein localises to the cell inner membrane. It carries out the reaction [GlcNAc-(1-&gt;4)-Mur2Ac(oyl-L-Ala-gamma-D-Glu-L-Lys-D-Ala-D-Ala)](n)-di-trans,octa-cis-undecaprenyl diphosphate + beta-D-GlcNAc-(1-&gt;4)-Mur2Ac(oyl-L-Ala-gamma-D-Glu-L-Lys-D-Ala-D-Ala)-di-trans,octa-cis-undecaprenyl diphosphate = [GlcNAc-(1-&gt;4)-Mur2Ac(oyl-L-Ala-gamma-D-Glu-L-Lys-D-Ala-D-Ala)](n+1)-di-trans,octa-cis-undecaprenyl diphosphate + di-trans,octa-cis-undecaprenyl diphosphate + H(+). It functions in the pathway cell wall biogenesis; peptidoglycan biosynthesis. Its function is as follows. Peptidoglycan polymerase that catalyzes glycan chain elongation from lipid-linked precursors. The sequence is that of Biosynthetic peptidoglycan transglycosylase from Shewanella frigidimarina (strain NCIMB 400).